We begin with the raw amino-acid sequence, 726 residues long: DNA-directed RNA polymerase subunit beta N-terminal section (726 aa).

It belongs to the RNA polymerase beta chain family. In terms of assembly, in plastids the minimal PEP RNA polymerase catalytic core is composed of four subunits: alpha, beta, beta', and beta''. When a (nuclear-encoded) sigma factor is associated with the core the holoenzyme is formed, which can initiate transcription.

It is found in the plastid. The protein localises to the chloroplast. The catalysed reaction is RNA(n) + a ribonucleoside 5'-triphosphate = RNA(n+1) + diphosphate. In terms of biological role, DNA-dependent RNA polymerase catalyzes the transcription of DNA into RNA using the four ribonucleoside triphosphates as substrates. The sequence is that of DNA-directed RNA polymerase subunit beta N-terminal section (rpoB1) from Tetradesmus obliquus (Green alga).